Reading from the N-terminus, the 346-residue chain is S-adenosylmethionine:tRNA ribosyltransferase-isomerase (346 aa).

Belongs to the QueA family. As to quaternary structure, monomer.

Its subcellular location is the cytoplasm. It carries out the reaction 7-aminomethyl-7-carbaguanosine(34) in tRNA + S-adenosyl-L-methionine = epoxyqueuosine(34) in tRNA + adenine + L-methionine + 2 H(+). The protein operates within tRNA modification; tRNA-queuosine biosynthesis. Transfers and isomerizes the ribose moiety from AdoMet to the 7-aminomethyl group of 7-deazaguanine (preQ1-tRNA) to give epoxyqueuosine (oQ-tRNA). The sequence is that of S-adenosylmethionine:tRNA ribosyltransferase-isomerase from Shewanella frigidimarina (strain NCIMB 400).